The chain runs to 359 residues: 3-dehydroquinate synthase (359 aa).

NAD(+) contacts are provided by residues 71–76, 105–109, 129–130, K142, K151, and 169–172; these read DGEQYK, GVIGD, TT, and CLKT. Zn(2+) is bound by residues E184, H247, and H264.

Belongs to the sugar phosphate cyclases superfamily. Dehydroquinate synthase family. Co(2+) is required as a cofactor. Zn(2+) serves as cofactor. The cofactor is NAD(+).

It is found in the cytoplasm. The catalysed reaction is 7-phospho-2-dehydro-3-deoxy-D-arabino-heptonate = 3-dehydroquinate + phosphate. The protein operates within metabolic intermediate biosynthesis; chorismate biosynthesis; chorismate from D-erythrose 4-phosphate and phosphoenolpyruvate: step 2/7. Catalyzes the conversion of 3-deoxy-D-arabino-heptulosonate 7-phosphate (DAHP) to dehydroquinate (DHQ). In Shewanella amazonensis (strain ATCC BAA-1098 / SB2B), this protein is 3-dehydroquinate synthase.